The chain runs to 196 residues: Dephospho-CoA kinase (196 aa).

The 192-residue stretch at 5 to 196 folds into the DPCK domain; that stretch reads IIGLTGGIAT…QVDIALNFEL (192 aa). Residue 13–18 participates in ATP binding; that stretch reads ATGKTT.

This sequence belongs to the CoaE family.

The protein resides in the cytoplasm. It catalyses the reaction 3'-dephospho-CoA + ATP = ADP + CoA + H(+). Its pathway is cofactor biosynthesis; coenzyme A biosynthesis; CoA from (R)-pantothenate: step 5/5. Catalyzes the phosphorylation of the 3'-hydroxyl group of dephosphocoenzyme A to form coenzyme A. The chain is Dephospho-CoA kinase from Trichormus variabilis (strain ATCC 29413 / PCC 7937) (Anabaena variabilis).